Consider the following 293-residue polypeptide: ATP phosphoribosyltransferase (293 aa).

The protein belongs to the ATP phosphoribosyltransferase family. Long subfamily. Mg(2+) serves as cofactor.

The protein resides in the cytoplasm. The catalysed reaction is 1-(5-phospho-beta-D-ribosyl)-ATP + diphosphate = 5-phospho-alpha-D-ribose 1-diphosphate + ATP. It participates in amino-acid biosynthesis; L-histidine biosynthesis; L-histidine from 5-phospho-alpha-D-ribose 1-diphosphate: step 1/9. Its activity is regulated as follows. Feedback inhibited by histidine. Its function is as follows. Catalyzes the condensation of ATP and 5-phosphoribose 1-diphosphate to form N'-(5'-phosphoribosyl)-ATP (PR-ATP). Has a crucial role in the pathway because the rate of histidine biosynthesis seems to be controlled primarily by regulation of HisG enzymatic activity. This chain is ATP phosphoribosyltransferase, found in Solidesulfovibrio magneticus (strain ATCC 700980 / DSM 13731 / RS-1) (Desulfovibrio magneticus).